Here is a 179-residue protein sequence, read N- to C-terminus: Iron sulfur cluster assembly protein 1, mitochondrial (179 aa).

Residues 160–179 (RSVKQPTLGPEAAQAETIAT) form a disordered region.

Belongs to the NifU family. Component of the core Fe-S cluster (ISC) assembly machinery. [2Fe-2S] cluster is required as a cofactor.

It localises to the mitochondrion matrix. Its pathway is cofactor biosynthesis; iron-sulfur cluster biosynthesis. Functionally, scaffold protein for the de novo synthesis of iron-sulfur (Fe-S) clusters within mitochondria, which is required for maturation of both mitochondrial and cytoplasmic [2Fe-2S] and [4Fe-4S] proteins. First, a [2Fe-2S] cluster is transiently assembled on the scaffold protein ISU1. In a second step, the cluster is released from ISU1, transferred to a glutaredoxin, followed by the formation of mitochondrial [2Fe-2S] proteins, the synthesis of [4Fe-4S] clusters and their target-specific insertion into the recipient apoproteins. Cluster assembly on ISU1 depends on the function of the cysteine desulfurase complex NFS1-ISD11, which serves as the sulfur donor for cluster synthesis, the iron-binding protein frataxin as the putative iron donor, and the electron transfer chain comprised of ferredoxin reductase and ferredoxin, which receive their electrons from NADH. The chain is Iron sulfur cluster assembly protein 1, mitochondrial (ISU1) from Debaryomyces hansenii (strain ATCC 36239 / CBS 767 / BCRC 21394 / JCM 1990 / NBRC 0083 / IGC 2968) (Yeast).